Reading from the N-terminus, the 790-residue chain is Solute carrier family 26 member 9 (790 aa).

Topologically, residues M1–Y70 are cytoplasmic. The chain crosses the membrane as a helical span at residues I71–A96. At N97 to A100 the chain is on the extracellular side. Residues V101 to F109 traverse the membrane as a helical segment. The Cytoplasmic portion of the chain corresponds to P110–A129. Residues V130–L142 form a helical membrane-spanning segment. The Extracellular portion of the chain corresponds to A143 to T162. A helical transmembrane segment spans residues A163–Q191. The Cytoplasmic portion of the chain corresponds to F192–E201. The chain crosses the membrane as a helical span at residues S202–F224. Residues G225–I237 are Extracellular-facing. An intramembrane region (helical) is located at residues V238–K246. At N247–A254 the chain is on the extracellular side. A helical transmembrane segment spans residues S255–R275. Over Y276–T286 the chain is Cytoplasmic. The chain crosses the membrane as a helical span at residues E287–G299. Residues S300–V334 lie on the Extracellular side of the membrane. A helical membrane pass occupies residues G335 to K358. The Cytoplasmic portion of the chain corresponds to H359–S365. The chain crosses the membrane as a helical span at residues N366 to G379. Over S380 to A390 the chain is Extracellular. A helical transmembrane segment spans residues L391–A400. Over G401–Q405 the chain is Cytoplasmic. A helical membrane pass occupies residues V406–M419. At L420–K431 the chain is on the extracellular side. A helical membrane pass occupies residues A432–R457. Residues K458 to L461 are Cytoplasmic-facing. A helical membrane pass occupies residues D462–L476. Residues S477–P479 lie on the Extracellular side of the membrane. The helical transmembrane segment at Y480 to Q498 threads the bilayer. Residues F499 to L790 are Cytoplasmic-facing. The 219-residue stretch at T519–A737 folds into the STAS domain.

Belongs to the SLC26A/SulP transporter (TC 2.A.53) family. Homodimer. As to expression, expressed in stomach and trachea. Abundantly expressed in the apical domain of the surface epithelial cells and the deep cells in the gastric gland. Also expressed in heart, brain, lung and liver.

The protein localises to the cell membrane. It is found in the endomembrane system. The enzyme catalyses chloride(in) = chloride(out). It catalyses the reaction hydrogencarbonate(in) + chloride(out) = hydrogencarbonate(out) + chloride(in). With respect to regulation, inhibited by ammonium and thiosulfate. Functionally, ion transporter that can act both as an ion channel and anion exchanger. Mainly acts as a chloride channel, which mediate uncoupled chloride anion transport in an alternate-access mechanism where a saturable binding site is alternately exposed to either one or the other side of the membrane. Also acts as a DIDS- and thiosulfate- sensitive anion exchanger the exchange of chloride for bicarbonate ions across the cell membrane. The protein is Solute carrier family 26 member 9 of Mus musculus (Mouse).